A 636-amino-acid chain; its full sequence is 1,4-alpha-glucan branching enzyme GlgB (636 aa).

The Nucleophile role is filled by D309. E362 (proton donor) is an active-site residue.

Belongs to the glycosyl hydrolase 13 family. GlgB subfamily. As to quaternary structure, monomer.

The enzyme catalyses Transfers a segment of a (1-&gt;4)-alpha-D-glucan chain to a primary hydroxy group in a similar glucan chain.. Its pathway is glycan biosynthesis; glycogen biosynthesis. In terms of biological role, catalyzes the formation of the alpha-1,6-glucosidic linkages in glycogen by scission of a 1,4-alpha-linked oligosaccharide from growing alpha-1,4-glucan chains and the subsequent attachment of the oligosaccharide to the alpha-1,6 position. The protein is 1,4-alpha-glucan branching enzyme GlgB of Aromatoleum aromaticum (strain DSM 19018 / LMG 30748 / EbN1) (Azoarcus sp. (strain EbN1)).